The primary structure comprises 688 residues: MTTQNFLAEIGTEELPPKALKKLATAFAENVENELNQAGLSFEKVEWFAAPRRLAVKALGLATAQPSKKIEKRGPAVSAAFDADGKPTKAAEGWARGCGISVEQAERLATDKGEWLVHRAVIEGQPTKNLLVDIISRSLANLPIPKMMRWGDKTEQFVRPVHTVTLFFGGELIEGEILGVKIANVVRGHRFLGEREFTISHADEYLTALREKGSVIADFNERKALILAKSQEKATALGGVADIEEDLLDEVTSLVEFPNVLTAKFEERFLAVPAEALVYTMKGDQKYFPIYDKDGKLLPHFIFVSNINPEDPTAIIEGNEKVVRPRLTDAEFFFKTDLKQRLEDRLPRLETVLFQQQLGTLRDKTARIEALAGEIAAQIGADKAKAERAGLLSKCDLMTNMVFEFTDTQGVMGMHYARHDGEDEEVAVALNEQYMPRFAGDELPKSLVACSVALADKFDTLTGIFGIGQAPKGSADPFALRRAALGSLRIIVEKNLPLDLEDLVRKSAALFGDKLTNANVVDDVVDFMLGRFRAWYQDEGIAVDVIQAVLARRPTRPADFDARVRAVSHFRTLDSAEALAAANKRVSNILAKADVAIGEVNPTACVEPAEKALAEAVLGLRTEVQPLIAKGEYTAVLDKLASLRQPVDSFFDNVMVNAEDPALRQNRLAILNTLQGLFLQVADISLLQ.

Belongs to the class-II aminoacyl-tRNA synthetase family. As to quaternary structure, tetramer of two alpha and two beta subunits.

The protein resides in the cytoplasm. It catalyses the reaction tRNA(Gly) + glycine + ATP = glycyl-tRNA(Gly) + AMP + diphosphate. The polypeptide is Glycine--tRNA ligase beta subunit (Actinobacillus pleuropneumoniae serotype 7 (strain AP76)).